The chain runs to 331 residues: Quinone oxidoreductase (331 aa).

N-acetylalanine is present on Ala2. Lys23 carries the N6-acetyllysine modification. Ser35 carries the phosphoserine modification. NADP(+) contacts are provided by residues Tyr53, 158–161 (SGGV), and Gly181. Lys186 is subject to N6-acetyllysine. Residues His200, Asn231, 248–251 (VGCR), and 271–273 (VSL) each bind NADP(+). Lys298 bears the N6-succinyllysine mark.

This sequence belongs to the zinc-containing alcohol dehydrogenase family. Quinone oxidoreductase subfamily. As to quaternary structure, homotetramer.

The protein resides in the cytoplasm. It catalyses the reaction 2 a quinone + NADPH + H(+) = 2 a 1,4-benzosemiquinone + NADP(+). Functionally, does not have alcohol dehydrogenase activity. Binds NADP and acts through a one-electron transfer process. Orthoquinones, such as 1,2-naphthoquinone or 9,10-phenanthrenequinone, are the best substrates (in vitro). May act in the detoxification of xenobiotics. Interacts with (AU)-rich elements (ARE) in the 3'-UTR of target mRNA species and enhances their stability. NADPH binding interferes with mRNA binding. The polypeptide is Quinone oxidoreductase (Cryz) (Mus musculus (Mouse)).